An 860-amino-acid polypeptide reads, in one-letter code: MKRLKKIDLNQKYDHKTVSEGVVDFWLTTDYANQDSDFCDPNAKPFSIIMPPPNLTGILHIGHAWNLSIQDLIVRYQKLVMGKINWIPGTDHAGIATQTKFESIQRTKEINYKKDDRTTHFNNIYQWSQESSQTIKNQAKSLGLALNWKKEKFTLSQESNKYVLDVFVKLYQQGYIVKKYTLVNWDTKLNTAISNIEVINKETTQKLHYIKYYLKDSNDYLVIATTRPETIYADVAVFVNPNDQRYLKYHNQMVINPLNNKLIPILVDEYIDMEFGSAVMKCTPGHDHNDYALSKKYQLEELSCINFDGTLNELALEFSGLDLYEARELIVKKLISEDKYVKFEEITSNVGYSDRSNVIVQPLLSKQWFLITTKFVDEIKKLVNNEDQIKIYPKRFLDTINNWLDHNQDWCISRQLVWGHQIPAWYHKDHPDEVIVSINSPGDDYYRDSDVLDTWFSSALWPLICFDDGLDQKEFNANFPNSLLVTAYDIVFFWVLRMIFMSWLLKKSIPFHDLLLHGLILDEHNRKMSKSLNNGVDPIQIIDQYGADALRLFLTSNTSPGEDVSYNVEKINAAASFLNKLWNLARYLKLIDQSKLTDQPLDSLDHWIIHRFNEVNAGIQDKLKEYRFALSNKQLSDFIWDDFANVYIELNKKAQWSKAKFELANDIFRKFLIMLHPSVPFITEQIYNTFEFSDSKPSIILEKWPGLIKIENALDHFDQIFNLIIKIRNFKQSFDLKNKDTLDLLYKNEVSYIKDLTKYLKTENVNLIKISDQKLNDLFLIATEDNEFYVVYTQDKTKIVDKLVVEIAKLEKEVERSSNIVNNKNFKKKAPKEKYEAELKKLSNYQEELKLKQDKLNSLK.

A 'HIGH' region motif is present at residues 53–63 (PNLTGILHIGH). Residues 527–531 (KMSKS) carry the 'KMSKS' region motif. Lysine 530 contributes to the ATP binding site. The stretch at 794–860 (QDKTKIVDKL…LKQDKLNSLK (67 aa)) forms a coiled coil.

This sequence belongs to the class-I aminoacyl-tRNA synthetase family. ValS type 1 subfamily. Monomer.

Its subcellular location is the cytoplasm. It catalyses the reaction tRNA(Val) + L-valine + ATP = L-valyl-tRNA(Val) + AMP + diphosphate. Its function is as follows. Catalyzes the attachment of valine to tRNA(Val). As ValRS can inadvertently accommodate and process structurally similar amino acids such as threonine, to avoid such errors, it has a 'posttransfer' editing activity that hydrolyzes mischarged Thr-tRNA(Val) in a tRNA-dependent manner. The protein is Valine--tRNA ligase of Mycoplasmoides gallisepticum (strain R(low / passage 15 / clone 2)) (Mycoplasma gallisepticum).